We begin with the raw amino-acid sequence, 334 residues long: N-acetyl-gamma-glutamyl-phosphate reductase (334 aa).

The active site involves C154.

The protein belongs to the NAGSA dehydrogenase family. Type 1 subfamily.

The protein resides in the cytoplasm. It catalyses the reaction N-acetyl-L-glutamate 5-semialdehyde + phosphate + NADP(+) = N-acetyl-L-glutamyl 5-phosphate + NADPH + H(+). The protein operates within amino-acid biosynthesis; L-arginine biosynthesis; N(2)-acetyl-L-ornithine from L-glutamate: step 3/4. Functionally, catalyzes the NADPH-dependent reduction of N-acetyl-5-glutamyl phosphate to yield N-acetyl-L-glutamate 5-semialdehyde. The protein is N-acetyl-gamma-glutamyl-phosphate reductase of Aliivibrio fischeri (strain ATCC 700601 / ES114) (Vibrio fischeri).